A 166-amino-acid polypeptide reads, in one-letter code: Large ribosomal subunit protein uL10 (166 aa).

Belongs to the universal ribosomal protein uL10 family. As to quaternary structure, part of the ribosomal stalk of the 50S ribosomal subunit. The N-terminus interacts with L11 and the large rRNA to form the base of the stalk. The C-terminus forms an elongated spine to which L12 dimers bind in a sequential fashion forming a multimeric L10(L12)X complex.

Its function is as follows. Forms part of the ribosomal stalk, playing a central role in the interaction of the ribosome with GTP-bound translation factors. The sequence is that of Large ribosomal subunit protein uL10 from Marinomonas sp. (strain MWYL1).